The sequence spans 497 residues: Glycerol kinase (497 aa).

Threonine 13 is a binding site for ADP. ATP is bound by residues threonine 13, threonine 14, and serine 15. Threonine 13 lines the sn-glycerol 3-phosphate pocket. Arginine 17 is a binding site for ADP. Residues arginine 83, glutamate 84, and tyrosine 135 each contribute to the sn-glycerol 3-phosphate site. Glycerol-binding residues include arginine 83, glutamate 84, and tyrosine 135. The residue at position 231 (histidine 231) is a Phosphohistidine; by HPr. Aspartate 245 contributes to the sn-glycerol 3-phosphate binding site. Aspartate 245 and glutamine 246 together coordinate glycerol. The ADP site is built by threonine 267 and glycine 310. ATP is bound by residues threonine 267, glycine 310, glutamine 314, and glycine 411. ADP is bound by residues glycine 411 and asparagine 415.

This sequence belongs to the FGGY kinase family. In terms of assembly, homotetramer and homodimer (in equilibrium). Post-translationally, the phosphoenolpyruvate-dependent sugar phosphotransferase system (PTS), including enzyme I, and histidine-containing protein (HPr) are required for the phosphorylation, which leads to the activation of the enzyme.

It carries out the reaction glycerol + ATP = sn-glycerol 3-phosphate + ADP + H(+). It participates in polyol metabolism; glycerol degradation via glycerol kinase pathway; sn-glycerol 3-phosphate from glycerol: step 1/1. Activated by phosphorylation and inhibited by fructose 1,6-bisphosphate (FBP). In terms of biological role, key enzyme in the regulation of glycerol uptake and metabolism. Catalyzes the phosphorylation of glycerol to yield sn-glycerol 3-phosphate. The sequence is that of Glycerol kinase from Listeria innocua serovar 6a (strain ATCC BAA-680 / CLIP 11262).